Consider the following 293-residue polypeptide: RNA-binding Raly-like protein (293 aa).

The 72-residue stretch at 21 to 92 folds into the RRM domain; it reads SRVFIGNLNT…QPLDINMAGE (72 aa). 2 disordered regions span residues 159-195 and 245-293; these read PRAAVTTTRRGKGVFSMKGGSRSAVSGSSSSGSKLKS and QDEC…LQIK. Low complexity predominate over residues 176 to 192; it reads KGGSRSAVSGSSSSGSK. Positions 192–254 form a coiled coil; sequence KLKSDELQTI…QDECVSENAD (63 aa). Over residues 259–284 the composition is skewed to acidic residues; sequence EPAEGAPDADGEELTDGVEEDFDEDG.

Belongs to the RRM HNRPC family. RALY subfamily.

This Bos taurus (Bovine) protein is RNA-binding Raly-like protein (RALYL).